The primary structure comprises 152 residues: Transcriptional regulator MraZ (152 aa).

SpoVT-AbrB domains follow at residues 5-52 (ANAI…PLPE) and 81-124 (ATEG…DHSV).

The protein belongs to the MraZ family. As to quaternary structure, forms oligomers.

The protein resides in the cytoplasm. The protein localises to the nucleoid. The chain is Transcriptional regulator MraZ from Pseudoalteromonas atlantica (strain T6c / ATCC BAA-1087).